Here is a 402-residue protein sequence, read N- to C-terminus: Argininosuccinate synthase (402 aa).

Residues 10–18 (AYSGGVDTS) and Ala38 contribute to the ATP site. Tyr89 is an L-citrulline binding site. Gly119 is an ATP binding site. Residues Thr121, Asn125, and Asp126 each contribute to the L-aspartate site. Asn125 serves as a coordination point for L-citrulline. Positions 129, 177, 186, 262, and 274 each coordinate L-citrulline.

The protein belongs to the argininosuccinate synthase family. Type 1 subfamily. In terms of assembly, homotetramer.

The protein localises to the cytoplasm. The enzyme catalyses L-citrulline + L-aspartate + ATP = 2-(N(omega)-L-arginino)succinate + AMP + diphosphate + H(+). The protein operates within amino-acid biosynthesis; L-arginine biosynthesis; L-arginine from L-ornithine and carbamoyl phosphate: step 2/3. The chain is Argininosuccinate synthase from Prochlorococcus marinus (strain SARG / CCMP1375 / SS120).